The primary structure comprises 1637 residues: MEYESSEISDITTGSCKKRLTFLKCILSDTTSDQKWAAEFGEDTEGHQFSLDYLLDTFIVLYDECSNSSLRREKGVSDFLKLSKPFVHIVRKLRLSRDDFDILKIIGRGAFGEVCVVQMISTEKVYAMKILNKWEMLKRAETACFREERDVLVFGDRQWITNLHYAFQDNINLYLVMDYYCGGDLLTLLSKFEDKLPEDMAKFYITEMILAINSIHQIRYVHRDIKPDNVLLDKRGHVRLADFGSCLRLDKDGTVQSNVAVGTPDYISPEILRAMEDGKGRYGTECDWWSLGVCMYEMLYGETPFYAESLVETYGKIMNHQNCFNLPSQETLNYKVSETSQDLLCKLICIPENRLGQNGIQDFMDHPWFVGIDWKNIRQGPAPYVPEVSSPTDTSNFDVDDNDVRLTDSIPPSANPAFSGFHLPFIGFTFSLTSSSTLDSKKNQSSGFGDDTLDTISSPQLAILPSNNSETPVDSVQLKALNDQLAALKQEKAELSKQHNEVFERLKTQDSELQDAISQRNIAMMEYSEVTEKLSELRNQKQKLSRQVRDKEEELDGAMQKNDSLRNELRKSDKTRRELELHIEDAVIEAAKEKKLREHAEDCCRQLQMELRKGSSSVETTMPLSISSEMSSYEIERLELQFSEKLSHQQTRHNMELEALREQFSELENANLALTKELQQTQERLKYTQMESITDSAETLLELKKQHDLEKSSWFEEKQRLSSEVNLKSKSLKELQAEDDEIFKELRMKREAITLWERQMAEIIQWVSDEKDARGYLQALATKMTEELEYLKHVGTFNNNGVDNKNWRNRRSQKLDKMELLNLQSALQREIQAKNMISDELSQTRSDLISTQKEVRDYKKRYDSILHDFQKKETELRDLQKGGLEYSESFLNKSTHHGLSSAFFRDMSKNSEIIDSAESFGNESGDNFTPNFFQSGNSGMLFNYEPKYAGKNNKDHSSMKEASVSDLSREESDQLVKESQKKVPGNTAIHQFLVRTFSSPTKCNHCTSLMVGLTRQGVVCEICGFACHTICCQKVPTTCPVPMDQTKRPLGIDPTRGIGTAYEGYVKVPKSGVIKRGWIRQFVVVCDFKLFLYDISPDRCALPSVSVSQVLDMRDPEFSVGSVRESDVIHAAKKDVPCIFKIKTALIDGGLSLNTLMLADNESEKSKWVIALGELHRILKRNSLPNTAIFKVNEILDNTLSLIRNALCSVIIYPNQILLGTEDGLFYINLDQYEIARIGESKKILQLWYIEEEQILVILCGKQRNLRLLPIRALEASDVEWIKVVESKNCISACTGIIRRFPNIVYSFIIALKRPNNHTQIVVYEINRTRTRHQKTCEFTIGYMAQHLQILSDMRLVVAHQSGFTAYFLRGEATAMSLVHPENQLCAFLNYSGVDAVRVIEILCPSGGNFGEYLLVFQTLAIYVDLQGRKSRDREIMYPAFPTYITFCDGHLLVFSDTHLDIFNTQTAEWVQSIGLKQSLPLNNLGNVVLSSVNDTPLIVYLSNIHTKGLLQYRDGNRKGLPSIKRRFSIREINKTIKSDRRSKMISAPTNFNHISHMGPGDGIQNQRLLDLPTTLETADQACSPIIHSLSCIPQSRKSNFLEQVDANSDDYGNDNIISRTPSPMASSFMDGLSNND.

The 270-residue stretch at 100-369 (FDILKIIGRG…IQDFMDHPWF (270 aa)) folds into the Protein kinase domain. ATP contacts are provided by residues 106 to 114 (IGRGAFGEV) and Lys-129. The active-site Proton acceptor is Asp-224. Residues 370–440 (VGIDWKNIRQ…SLTSSSTLDS (71 aa)) enclose the AGC-kinase C-terminal domain. Coiled-coil stretches lie at residues 473-587 (VDSV…EDAV), 643-688 (SEKL…LKYT), and 839-881 (DELS…DLQK). The tract at residues 538 to 575 (RNQKQKLSRQVRDKEEELDGAMQKNDSLRNELRKSDKT) is disordered. The segment covering 563-575 (DSLRNELRKSDKT) has biased composition (basic and acidic residues). A Phosphothreonine modification is found at Thr-895. A disordered region spans residues 952–971 (NNKDHSSMKEASVSDLSREE). The Phorbol-ester/DAG-type zinc finger occupies 989 to 1039 (IHQFLVRTFSSPTKCNHCTSLMVGLTRQGVVCEICGFACHTICCQKVPTTC). Residues 1059–1177 (GTAYEGYVKV…WVIALGELHR (119 aa)) form the PH domain. The region spanning 1203–1489 (IRNALCSVII…LPLNNLGNVV (287 aa)) is the CNH domain. Residues 1546-1559 (ISAPTNFNHISHMG) form the CRIB domain. Ser-1584 carries the phosphoserine modification. Positions 1611-1637 (DYGNDNIISRTPSPMASSFMDGLSNND) are disordered. Residues 1616 to 1626 (NIISRTPSPMA) show a composition bias toward polar residues.

It belongs to the protein kinase superfamily. AGC Ser/Thr protein kinase family. DMPK subfamily. As to quaternary structure, interacts tightly with GTP-bound but not GDP-bound Cdc42.

It carries out the reaction L-seryl-[protein] + ATP = O-phospho-L-seryl-[protein] + ADP + H(+). The catalysed reaction is L-threonyl-[protein] + ATP = O-phospho-L-threonyl-[protein] + ADP + H(+). In terms of biological role, acts as a downstream effector for the regulation of actin polymerization by Cdc42. This Drosophila melanogaster (Fruit fly) protein is Serine/threonine-protein kinase Genghis Khan (gek).